The chain runs to 113 residues: UPF0122 protein SSU98_0878 (113 aa).

This sequence belongs to the UPF0122 family.

In terms of biological role, might take part in the signal recognition particle (SRP) pathway. This is inferred from the conservation of its genetic proximity to ftsY/ffh. May be a regulatory protein. This is UPF0122 protein SSU98_0878 from Streptococcus suis (strain 98HAH33).